The following is a 524-amino-acid chain: Putative ATP-dependent RNA helicase R458 (524 aa).

The 214-residue stretch at 125 to 338 folds into the Helicase ATP-binding domain; it reads VPELIQRKDT…NSYFRKYSPI (214 aa). 138–145 serves as a coordination point for ATP; sequence FKSGTGKT. The short motif at 268-271 is the DEFD box element; the sequence is DEFD. The region spanning 373-524 is the Helicase C-terminal domain; it reads IILDLLKQCR…QLPGDLSTLL (152 aa).

This sequence belongs to the DEAD box helicase family. eIF4A subfamily.

The catalysed reaction is ATP + H2O = ADP + phosphate + H(+). Functionally, putative ATP-dependent RNA helicase. This chain is Putative ATP-dependent RNA helicase R458, found in Acanthamoeba polyphaga mimivirus (APMV).